Here is a 1487-residue protein sequence, read N- to C-terminus: Secretory phospholipase A2 receptor (1487 aa).

The signal sequence occupies residues 1 to 26 (MVQWLAMLQLLWLQQLLLLGIHQGIA). Topologically, residues 27–1396 (QDLTHIQEPS…AQPEKGLSHS (1370 aa)) are extracellular. Residues 42-165 (KGIFIIQSES…SSGGDICEHP (124 aa)) enclose the Ricin B-type lectin domain. Cystine bridges form between Cys55–Cys68, Cys93–Cys110, Cys181–Cys207, and Cys195–Cys222. N-linked (GlcNAc...) asparagine glycosylation occurs at Asn97. Residues 176 to 224 (AHGMPCVFPFQFKGHWHHDCIREGQKEHLLWCATTSRYEEDEKWGFCPD) form the Fibronectin type-II domain. The N-linked (GlcNAc...) asparagine glycan is linked to Asn239. C-type lectin domains follow at residues 241–357 (SSRI…YICK), 387–504 (FNRK…YICK), 524–643 (HGRF…MSLC), 673–797 (GLAS…WICR), 819–938 (YQNA…SICK), and 964–1095 (FNYK…GFVC). 10 cysteine pairs are disulfide-bonded: Cys263/Cys356, Cys333/Cys348, Cys408/Cys503, Cys480/Cys495, Cys617/Cys634, Cys699/Cys796, Cys774/Cys788, Cys840/Cys937, Cys914/Cys929, and Cys1066/Cys1086. Residue Asn928 is glycosylated (N-linked (GlcNAc...) asparagine). Asn1107, Asn1122, and Asn1131 each carry an N-linked (GlcNAc...) asparagine glycan. C-type lectin domains lie at 1120-1231 (YGNR…GAIC) and 1256-1377 (FKGN…FICK). 3 disulfide bridges follow: Cys1208/Cys1222, Cys1279/Cys1376, and Cys1353/Cys1368. Residues 1397–1417 (IVPVTVTLTLIIALGIFMLCF) traverse the membrane as a helical segment. Residues 1418–1487 (WIYKQKSDIF…HKGRPICISP (70 aa)) lie on the Cytoplasmic side of the membrane. The short motif at 1435 to 1441 (GSYYPTL) is the Endocytosis signal element. The segment covering 1463–1475 (DEEVRDAPATESK) has biased composition (basic and acidic residues). The disordered stretch occupies residues 1463 to 1487 (DEEVRDAPATESKRGHKGRPICISP).

Interacts with sPLA2-IB/PLA2G1B; this interaction mediates intracellular signaling as well as clearance of extracellular sPLA2-IB/PLA2G1B via endocytotic pathway. Interacts with sPLA2-X/PLA2G10; this interaction mediates sPLA2-X/PLA2G10 clearance and inactivation. The secretory phospholipase A2 receptor form may be produced by the action of metalloproteinases. It contains all extracellular domains and only lacks transmembrane and cytosolic regions. It is however unclear whether this form is produced by proteolytic cleavage as suggested by some experiments reported by PubMed:11830583, or by alternative splicing. Widely expressed. Present in type II alveolar epithelial cells and a subset of splenic lymphocytes. Present at the surface of polymorphonuclear neutrophils (at protein level).

It localises to the cell membrane. It is found in the secreted. In terms of biological role, receptor for secretory phospholipase A2 (sPLA2). Acts as a receptor for phospholipases sPLA2-IB/PLA2G1B, sPLA2-X/PLA2G10 and, with lower affinity, sPLA2-IIA/PLA2G2A. Also able to bind to snake PA2-like toxins. Although its precise function remains unclear, binding of sPLA2 to its receptor participates in both positive and negative regulation of sPLA2 functions as well as clearance of sPLA2. Binding of sPLA2-IB/PLA2G1B induces various effects depending on the cell type, such as activation of the mitogen-activated protein kinase (MAPK) cascade to induce cell proliferation, the production of lipid mediators, selective release of arachidonic acid in bone marrow-derived mast cells. In neutrophils, binding of sPLA2-IB/PLA2G1B can activate p38 MAPK to stimulate elastase release and cell adhesion. May be involved in responses in pro-inflammatory cytokine productions during endotoxic shock. Also has endocytic properties and rapidly internalizes sPLA2 ligands, which is particularly important for the clearance of extracellular sPLA2s to protect their potent enzymatic activities. The soluble secretory phospholipase A2 receptor form is circulating and acts as a negative regulator of sPLA2 functions by blocking the biological functions of sPLA2-IB/PLA2G1B and sPLA2-X/PLA2G10. In podocytes, binding of sPLA2-IB/PLA2G1B can regulate podocyte survival and glomerular homeostasis. The polypeptide is Secretory phospholipase A2 receptor (Pla2r1) (Mus musculus (Mouse)).